The primary structure comprises 336 residues: Iron(3+)-hydroxamate import system permease protein FhuG (336 aa).

Helical transmembrane passes span 9-29, 63-83, 91-111, 124-144, 155-175, 193-213, 245-265, 285-305, and 313-333; these read LIVMAVTFLLIVVVFFISLNL, IILSLLVGAGISVAGAILQSV, PGILGINAGGSLAVVLFIYFF, FMLPFSALAGAILAAFLIYIL, LILVGIGVNAGFNALLLIFQL, IWGANWNMIWAILPWIVILLL, ILLLAAVTLAASCVAAAGGIA, TLIPVSAFIGSFLFLLADTLA, and EIPVGLVISVLGAPYFIYLLM.

Belongs to the binding-protein-dependent transport system permease family. FecCD subfamily. In terms of assembly, the complex is composed of an ATP-binding protein (FhuC), two transmembrane proteins (FhuB and FhuG) and a solute-binding protein (FhuD or YxeB).

Its subcellular location is the cell membrane. Functionally, part of the ABC transporter complex FhuBGCD involved in iron(3+)-hydroxamate import. Responsible for the translocation of the substrate across the membrane. This is Iron(3+)-hydroxamate import system permease protein FhuG (fhuG) from Bacillus subtilis (strain 168).